Consider the following 408-residue polypeptide: LL-diaminopimelate aminotransferase (408 aa).

The substrate site is built by tyrosine 15 and glycine 42. Residues tyrosine 72, 108–109, tyrosine 132, asparagine 186, tyrosine 217, and 245–247 contribute to the pyridoxal 5'-phosphate site; these read AK and SFS. Residues lysine 109, tyrosine 132, and asparagine 186 each contribute to the substrate site. An N6-(pyridoxal phosphate)lysine modification is found at lysine 248. Pyridoxal 5'-phosphate is bound by residues arginine 256 and asparagine 291. Substrate contacts are provided by asparagine 291 and arginine 386.

The protein belongs to the class-I pyridoxal-phosphate-dependent aminotransferase family. LL-diaminopimelate aminotransferase subfamily. Homodimer. It depends on pyridoxal 5'-phosphate as a cofactor.

The catalysed reaction is (2S,6S)-2,6-diaminopimelate + 2-oxoglutarate = (S)-2,3,4,5-tetrahydrodipicolinate + L-glutamate + H2O + H(+). It participates in amino-acid biosynthesis; L-lysine biosynthesis via DAP pathway; LL-2,6-diaminopimelate from (S)-tetrahydrodipicolinate (aminotransferase route): step 1/1. Functionally, involved in the synthesis of meso-diaminopimelate (m-DAP or DL-DAP), required for both lysine and peptidoglycan biosynthesis. Catalyzes the direct conversion of tetrahydrodipicolinate to LL-diaminopimelate. In Desulfotalea psychrophila (strain LSv54 / DSM 12343), this protein is LL-diaminopimelate aminotransferase.